Consider the following 40-residue polypeptide: Large ribosomal subunit protein bL36B (40 aa).

Belongs to the bacterial ribosomal protein bL36 family.

This chain is Large ribosomal subunit protein bL36B, found in Streptomyces coelicolor (strain ATCC BAA-471 / A3(2) / M145).